We begin with the raw amino-acid sequence, 400 residues long: Deoxyguanosinetriphosphate triphosphohydrolase-like protein (400 aa).

The 143-residue stretch at 73–215 (RLTHSIEVSQ…AAIADDIAYN (143 aa)) folds into the HD domain.

Belongs to the dGTPase family. Type 2 subfamily.

This Bartonella henselae (strain ATCC 49882 / DSM 28221 / CCUG 30454 / Houston 1) (Rochalimaea henselae) protein is Deoxyguanosinetriphosphate triphosphohydrolase-like protein.